Reading from the N-terminus, the 426-residue chain is Riboflavin biosynthesis protein PYRD, chloroplastic (426 aa).

A chloroplast-targeting transit peptide spans methionine 1–leucine 61. The CMP/dCMP-type deaminase domain maps to valine 72 to threonine 194. Residue histidine 121 participates in Zn(2+) binding. Glutamate 123 acts as the Proton donor in catalysis. Residues cysteine 146 and cysteine 155 each contribute to the Zn(2+) site.

Zn(2+) is required as a cofactor.

It is found in the plastid. The protein resides in the chloroplast. The catalysed reaction is 2,5-diamino-6-hydroxy-4-(5-phosphoribosylamino)-pyrimidine + H2O + H(+) = 5-amino-6-(5-phospho-D-ribosylamino)uracil + NH4(+). It functions in the pathway cofactor biosynthesis; riboflavin biosynthesis; 5-amino-6-(D-ribitylamino)uracil from GTP: step 2/4. Monofunctional pyrimidine deaminase involved in the riboflavin biosynthesis pathway. Also has a reductase domain that lacks catalytically essential substrate-binding residues. In Arabidopsis thaliana (Mouse-ear cress), this protein is Riboflavin biosynthesis protein PYRD, chloroplastic (PYRD).